We begin with the raw amino-acid sequence, 167 residues long: N-alpha-acetyltransferase (167 aa).

An N-acetyltransferase domain is found at 12–167 (YRIRNARLTD…EDAYLMAAPL (156 aa)). Tyr-37 provides a ligand contact to substrate. His-88 contacts Zn(2+). Acetyl-CoA-binding positions include 92–94 (IAV) and 100–105 (RLGIGT). Glu-127 serves as a coordination point for Zn(2+). Acetyl-CoA contacts are provided by residues Asn-132 and 139-141 (YKK). Residue Tyr-154 participates in substrate binding.

It belongs to the acetyltransferase family. ARD1 subfamily. As to quaternary structure, homodimer.

The protein localises to the cytoplasm. It carries out the reaction N-terminal L-alanyl-[protein] + acetyl-CoA = N-terminal N(alpha)-acetyl-L-alanyl-[protein] + CoA + H(+). The enzyme catalyses N-terminal L-seryl-[protein] + acetyl-CoA = N-terminal N(alpha)-acetyl-L-seryl-[protein] + CoA + H(+). The catalysed reaction is N-terminal L-methionyl-L-leucyl-[protein] + acetyl-CoA = N-terminal N(alpha)-acetyl-L-methionyl-L-leucyl-[protein] + CoA + H(+). It catalyses the reaction N-terminal L-methionyl-L-glutamyl-[protein] + acetyl-CoA = N-terminal N(alpha)-acetyl-L-methionyl-L-glutamyl-[protein] + CoA + H(+). Displays alpha (N-terminal) acetyltransferase activity. Catalyzes the covalent attachment of an acetyl moiety from acetyl-CoA to the free alpha-amino group at the N-terminus of a protein. This Sulfurisphaera tokodaii (strain DSM 16993 / JCM 10545 / NBRC 100140 / 7) (Sulfolobus tokodaii) protein is N-alpha-acetyltransferase.